A 142-amino-acid polypeptide reads, in one-letter code: Small ribosomal subunit protein uS12 (142 aa).

The segment at 1-22 (MPTFNQLVRKGRKAAKKKSTAP) is disordered. Positions 9–19 (RKGRKAAKKKS) are enriched in basic residues. At Asp-102 the chain carries 3-methylthioaspartic acid.

It belongs to the universal ribosomal protein uS12 family. Part of the 30S ribosomal subunit. Contacts proteins S8 and S17. May interact with IF1 in the 30S initiation complex.

In terms of biological role, with S4 and S5 plays an important role in translational accuracy. Interacts with and stabilizes bases of the 16S rRNA that are involved in tRNA selection in the A site and with the mRNA backbone. Located at the interface of the 30S and 50S subunits, it traverses the body of the 30S subunit contacting proteins on the other side and probably holding the rRNA structure together. The combined cluster of proteins S8, S12 and S17 appears to hold together the shoulder and platform of the 30S subunit. In Acetivibrio thermocellus (strain ATCC 27405 / DSM 1237 / JCM 9322 / NBRC 103400 / NCIMB 10682 / NRRL B-4536 / VPI 7372) (Clostridium thermocellum), this protein is Small ribosomal subunit protein uS12.